A 534-amino-acid chain; its full sequence is ATP synthase subunit alpha (534 aa).

170–177 (GDRQTGKT) is a binding site for ATP. A disordered region spans residues 505–534 (HEDARVKSETAQAAGKDKDEKAAATAGAGK).

The protein belongs to the ATPase alpha/beta chains family. As to quaternary structure, F-type ATPases have 2 components, CF(1) - the catalytic core - and CF(0) - the membrane proton channel. CF(1) has five subunits: alpha(3), beta(3), gamma(1), delta(1), epsilon(1). CF(0) has three main subunits: a(1), b(2) and c(9-12). The alpha and beta chains form an alternating ring which encloses part of the gamma chain. CF(1) is attached to CF(0) by a central stalk formed by the gamma and epsilon chains, while a peripheral stalk is formed by the delta and b chains.

Its subcellular location is the cell inner membrane. The catalysed reaction is ATP + H2O + 4 H(+)(in) = ADP + phosphate + 5 H(+)(out). Functionally, produces ATP from ADP in the presence of a proton gradient across the membrane. The alpha chain is a regulatory subunit. The sequence is that of ATP synthase subunit alpha from Acidobacterium capsulatum (strain ATCC 51196 / DSM 11244 / BCRC 80197 / JCM 7670 / NBRC 15755 / NCIMB 13165 / 161).